A 364-amino-acid polypeptide reads, in one-letter code: Probable cysteine protease RDL4 (364 aa).

A signal peptide spans 1-23; sequence MGSAKSAMLILLVAMVIASCATA. Residues 24–136 constitute a propeptide, activation peptide; sequence IDMSVVSYDD…DRYKTSADDV (113 aa). N87 carries an N-linked (GlcNAc...) asparagine glycan. 3 disulfide bridges follow: C158-C199, C192-C232, and C291-C342. C161 is a catalytic residue. Active-site residues include H297 and N317.

The protein belongs to the peptidase C1 family. As to expression, expressed in inflorescences.

Its function is as follows. Probable thiol protease. In Arabidopsis thaliana (Mouse-ear cress), this protein is Probable cysteine protease RDL4.